The sequence spans 199 residues: Dephospho-CoA kinase (199 aa).

In terms of domain architecture, DPCK spans 3-199 (TLGVTGGIGS…ELYWAVTGGQ (197 aa)). 11–16 (GSGKTT) contributes to the ATP binding site.

The protein belongs to the CoaE family.

Its subcellular location is the cytoplasm. The catalysed reaction is 3'-dephospho-CoA + ATP = ADP + CoA + H(+). It functions in the pathway cofactor biosynthesis; coenzyme A biosynthesis; CoA from (R)-pantothenate: step 5/5. Functionally, catalyzes the phosphorylation of the 3'-hydroxyl group of dephosphocoenzyme A to form coenzyme A. The protein is Dephospho-CoA kinase of Salinibacter ruber (strain DSM 13855 / M31).